A 122-amino-acid polypeptide reads, in one-letter code: Large ribosomal subunit protein uL14 (122 aa).

The protein belongs to the universal ribosomal protein uL14 family. As to quaternary structure, part of the 50S ribosomal subunit. Forms a cluster with proteins L3 and L19. In the 70S ribosome, L14 and L19 interact and together make contacts with the 16S rRNA in bridges B5 and B8.

Its function is as follows. Binds to 23S rRNA. Forms part of two intersubunit bridges in the 70S ribosome. The polypeptide is Large ribosomal subunit protein uL14 (Gluconacetobacter diazotrophicus (strain ATCC 49037 / DSM 5601 / CCUG 37298 / CIP 103539 / LMG 7603 / PAl5)).